The sequence spans 251 residues: Regulator of G-protein signaling 9-binding protein B (251 aa).

The Cytoplasmic segment spans residues 1-230 (MPLQNVKVAD…NSKGCCSDGQ (230 aa)). Coiled coils occupy residues 52 to 94 (HLRD…ELER) and 158 to 187 (ANKA…MKVN). Residues 231–250 (LIVFLLLCGTALVAITLYSI) traverse the membrane as a helical; Anchor for type IV membrane protein segment. A topological domain (extracellular) is located at residue Leu-251.

It belongs to the RGS7BP/RGS9BP family.

It localises to the membrane. Regulator of G protein-coupled receptor (GPCR) signaling. Probably acts by regulating the activity of some 'R7' family protein (RGS6, RGS7, RGS9 and/or RGS11). The polypeptide is Regulator of G-protein signaling 9-binding protein B (rgs9bp-b) (Xenopus laevis (African clawed frog)).